The primary structure comprises 181 residues: Large ribosomal subunit protein uL5 (181 aa).

This sequence belongs to the universal ribosomal protein uL5 family. In terms of assembly, part of the 50S ribosomal subunit; contacts the 5S rRNA and probably tRNA. Forms a bridge to the 30S subunit in the 70S ribosome.

Its function is as follows. This is one of the proteins that bind and probably mediate the attachment of the 5S RNA into the large ribosomal subunit, where it forms part of the central protuberance. In the 70S ribosome it contacts protein S13 of the 30S subunit (bridge B1b), connecting the 2 subunits; this bridge is implicated in subunit movement. May contact the P site tRNA; the 5S rRNA and some of its associated proteins might help stabilize positioning of ribosome-bound tRNAs. The polypeptide is Large ribosomal subunit protein uL5 (Methanococcus aeolicus (strain ATCC BAA-1280 / DSM 17508 / OCM 812 / Nankai-3)).